The chain runs to 360 residues: Peptide chain release factor 1 (360 aa).

Gln235 carries the N5-methylglutamine modification. Residues 280-293 (DKQSHEQQAKEAAT) show a composition bias toward basic and acidic residues. The segment at 280–300 (DKQSHEQQAKEAATRKSLIGS) is disordered.

The protein belongs to the prokaryotic/mitochondrial release factor family. In terms of processing, methylated by PrmC. Methylation increases the termination efficiency of RF1.

Its subcellular location is the cytoplasm. Its function is as follows. Peptide chain release factor 1 directs the termination of translation in response to the peptide chain termination codons UAG and UAA. In Paraburkholderia phytofirmans (strain DSM 17436 / LMG 22146 / PsJN) (Burkholderia phytofirmans), this protein is Peptide chain release factor 1.